The primary structure comprises 456 residues: Tyrosine phenol-lyase (456 aa).

Lysine 257 bears the N6-(pyridoxal phosphate)lysine mark.

This sequence belongs to the beta-eliminating lyase family. As to quaternary structure, homotetramer. Pyridoxal 5'-phosphate is required as a cofactor.

The catalysed reaction is L-tyrosine + H2O = phenol + pyruvate + NH4(+). The polypeptide is Tyrosine phenol-lyase (tpl) (Citrobacter intermedius (Escherichia intermedia)).